The primary structure comprises 346 residues: MSERLVTSNEIGIDSTNEYSLRPEKINEYIGQDKVKERLNIFIKAAQRREEALDHVILYGPPGLGKTTLANIIANEMGGNLKITSGPAIERAGDLAAILTTLNTNDVLFIDEIHRLNRSVEEILYPAMEDYVLDIIIGKGAASKSIRLDLPKFTLIGATTRIGMLSSPLRDRFGVLCSMEYYTDEQLKEIIIRSAEILGCHITEEGAFEIAKRSRGTPRIANRLLKRVRDFAEVLYDNEITEEAAKKSLEILEVDGEGFDRIDNKILEAIIDNFNGGPVGIETLAYFVGEELDTIEDVYEPYLLQKGFIVRTPRGRMATDKAYKHLGRVRFNESKIDSKQCTLFEK.

Residues 1 to 182 are large ATPase domain (RuvB-L); it reads MSERLVTSNE…FGVLCSMEYY (182 aa). Residues L21, R22, G63, K66, T67, T68, 129-131, R172, Y182, and R219 each bind ATP; that span reads EDY. Mg(2+) is bound at residue T67. Residues 183–253 form a small ATPAse domain (RuvB-S) region; it reads TDEQLKEIII…AAKKSLEILE (71 aa). The segment at 256 to 346 is head domain (RuvB-H); that stretch reads GEGFDRIDNK…DSKQCTLFEK (91 aa). R311 and R316 together coordinate DNA.

The protein belongs to the RuvB family. Homohexamer. Forms an RuvA(8)-RuvB(12)-Holliday junction (HJ) complex. HJ DNA is sandwiched between 2 RuvA tetramers; dsDNA enters through RuvA and exits via RuvB. An RuvB hexamer assembles on each DNA strand where it exits the tetramer. Each RuvB hexamer is contacted by two RuvA subunits (via domain III) on 2 adjacent RuvB subunits; this complex drives branch migration. In the full resolvosome a probable DNA-RuvA(4)-RuvB(12)-RuvC(2) complex forms which resolves the HJ.

The protein localises to the cytoplasm. It catalyses the reaction ATP + H2O = ADP + phosphate + H(+). The RuvA-RuvB-RuvC complex processes Holliday junction (HJ) DNA during genetic recombination and DNA repair, while the RuvA-RuvB complex plays an important role in the rescue of blocked DNA replication forks via replication fork reversal (RFR). RuvA specifically binds to HJ cruciform DNA, conferring on it an open structure. The RuvB hexamer acts as an ATP-dependent pump, pulling dsDNA into and through the RuvAB complex. RuvB forms 2 homohexamers on either side of HJ DNA bound by 1 or 2 RuvA tetramers; 4 subunits per hexamer contact DNA at a time. Coordinated motions by a converter formed by DNA-disengaged RuvB subunits stimulates ATP hydrolysis and nucleotide exchange. Immobilization of the converter enables RuvB to convert the ATP-contained energy into a lever motion, pulling 2 nucleotides of DNA out of the RuvA tetramer per ATP hydrolyzed, thus driving DNA branch migration. The RuvB motors rotate together with the DNA substrate, which together with the progressing nucleotide cycle form the mechanistic basis for DNA recombination by continuous HJ branch migration. Branch migration allows RuvC to scan DNA until it finds its consensus sequence, where it cleaves and resolves cruciform DNA. The polypeptide is Holliday junction branch migration complex subunit RuvB (Clostridium perfringens (strain ATCC 13124 / DSM 756 / JCM 1290 / NCIMB 6125 / NCTC 8237 / Type A)).